A 493-amino-acid polypeptide reads, in one-letter code: Occludin (493 aa).

Residues 1 to 47 (MYSRPSNYAPSKDVYGGEMRSQPAYSYYPEEEIQHFYRWSSPPGIIK) lie on the Cytoplasmic side of the membrane. The MARVEL domain maps to 41–250 (SPPGIIKIMS…IIFFAVKTRK (210 aa)). Residues 48–70 (IMSILIVVMCVGIFACVASTLPW) form a helical membrane-spanning segment. Over 71–116 (DLDITGQSMGYGMGSGSYSGGYTGYGFGGSQMGLGFAYGGNYTDPR) the chain is Extracellular. Residues 117–141 (AAKGFILAMAAFCFIIGLVIFVMLV) form a helical membrane-spanning segment. The Cytoplasmic segment spans residues 142–151 (TRTPLSTSRK). Residues 152 to 176 (FYLIVIIVSAIIGGLVFIATIVYTV) form a helical membrane-spanning segment. The Extracellular segment spans residues 177–224 (GVNPVAQASGSAFYTQIVSICNQFYSPVQTGVFVNQYLYHYCVVEPQE). Residues C197 and C218 are joined by a disulfide bond. A helical transmembrane segment spans residues 225–246 (AIAIVLGFLIVVAFAIIIFFAV). Residues 247 to 493 (KTRKKINQYG…IKQMVSNYDK (247 aa)) lie on the Cytoplasmic side of the membrane. Positions 334-407 (YGMSPRHYSS…TKQRQEYKQE (74 aa)) are disordered. Over residues 352 to 361 (APPKKRPGKP) the composition is skewed to basic residues. Phosphothreonine; by CK2; in vitro is present on T375. S379 is subject to Phosphoserine; by CK2; in vitro. Residues 379–389 (SADELEDDSWD) show a composition bias toward acidic residues. Residues 386–493 (DSWDSEYPPI…IKQMVSNYDK (108 aa)) enclose the OCEL domain. Positions 396–428 (TQTKQRQEYKQEFASDLHEYKRLQAELDELSKI) form a coiled coil.

Belongs to the ELL/occludin family. Interacts in vitro with cingulin, possibly directly. Interacts with ZO-1. In terms of processing, phosphorylated. Localized at tight junctions of both epithelial and endothelial cells.

The protein resides in the cell membrane. Its subcellular location is the cell junction. It localises to the tight junction. In terms of biological role, probably plays a role in the formation and regulation of the tight junction (TJ) paracellular permeability barrier. The protein is Occludin (ocln) of Xenopus laevis (African clawed frog).